We begin with the raw amino-acid sequence, 274 residues long: MQAILSSWFVQGMIKATSDMWLKGWDERNGGNVSLRLTAEDVTPYESDFSPQPRHEALSQPMPELADCWFIVTGSGKFFRNVQLDPADSLVVLQVDSDGKGYRIFWGLTNGGLPTSELASHFQSHIVRMGVTHGRDRVIMHCHATNLIALSYVLELNTATFTRELWEGSTECLVVFPDGVGIVPWMVPGTDSIGDATSEQMKRHSLVLWPFHGIFGTGPTLDEAFGLIDTAEKSAEVMVKVRSMGGKKQTISTEELIALGKRFGVTPLEAALRV.

Glutamate 117 is a catalytic residue. Histidine 141, histidine 143, and histidine 212 together coordinate Zn(2+).

The protein belongs to the aldolase class II family. RhaD subfamily. As to quaternary structure, homotetramer. The cofactor is Zn(2+).

It is found in the cytoplasm. The catalysed reaction is L-rhamnulose 1-phosphate = (S)-lactaldehyde + dihydroxyacetone phosphate. It functions in the pathway carbohydrate degradation; L-rhamnose degradation; glycerone phosphate from L-rhamnose: step 3/3. Its function is as follows. Catalyzes the reversible cleavage of L-rhamnulose-1-phosphate to dihydroxyacetone phosphate (DHAP) and L-lactaldehyde. The polypeptide is Rhamnulose-1-phosphate aldolase (Pectobacterium atrosepticum (strain SCRI 1043 / ATCC BAA-672) (Erwinia carotovora subsp. atroseptica)).